Reading from the N-terminus, the 527-residue chain is NAD(P)H-quinone oxidoreductase chain 4 1 (527 aa).

13 helical membrane-spanning segments follow: residues 6–26 (FPWL…VPII), 36–56 (WFAL…FYSS), 91–111 (LIIL…PVTF), 113–133 (PKLF…VFAV), 136–156 (LLLF…ILSI), 169–189 (FILY…TMAF), 212–232 (LFLY…FPLH), 243–263 (TAPA…YALL), 275–295 (AVFA…AALT), 306–326 (IAYS…SFTD), 331–351 (GAML…FMVG), 387–407 (LALP…GFAT), and 417–437 (VIIV…LLSM).

Belongs to the complex I subunit 4 family.

The protein localises to the cellular thylakoid membrane. The enzyme catalyses a plastoquinone + NADH + (n+1) H(+)(in) = a plastoquinol + NAD(+) + n H(+)(out). It catalyses the reaction a plastoquinone + NADPH + (n+1) H(+)(in) = a plastoquinol + NADP(+) + n H(+)(out). Functionally, NDH-1 shuttles electrons from NAD(P)H, via FMN and iron-sulfur (Fe-S) centers, to quinones in the respiratory chain. The immediate electron acceptor for the enzyme in this species is believed to be plastoquinone. Couples the redox reaction to proton translocation (for every two electrons transferred, four hydrogen ions are translocated across the cytoplasmic membrane), and thus conserves the redox energy in a proton gradient. The sequence is that of NAD(P)H-quinone oxidoreductase chain 4 1 from Microcystis aeruginosa (strain NIES-843 / IAM M-2473).